Consider the following 427-residue polypeptide: Serine--tRNA ligase (427 aa).

Residue Thr230–Glu232 participates in L-serine binding. ATP contacts are provided by residues Arg260–Glu262 and Val276. Position 283 (Glu283) interacts with L-serine. ATP is bound at residue Glu347 to Ser350. Thr387 serves as a coordination point for L-serine.

The protein belongs to the class-II aminoacyl-tRNA synthetase family. Type-1 seryl-tRNA synthetase subfamily. Homodimer. The tRNA molecule binds across the dimer.

The protein resides in the cytoplasm. The enzyme catalyses tRNA(Ser) + L-serine + ATP = L-seryl-tRNA(Ser) + AMP + diphosphate + H(+). It carries out the reaction tRNA(Sec) + L-serine + ATP = L-seryl-tRNA(Sec) + AMP + diphosphate + H(+). Its pathway is aminoacyl-tRNA biosynthesis; selenocysteinyl-tRNA(Sec) biosynthesis; L-seryl-tRNA(Sec) from L-serine and tRNA(Sec): step 1/1. Its function is as follows. Catalyzes the attachment of serine to tRNA(Ser). Is also able to aminoacylate tRNA(Sec) with serine, to form the misacylated tRNA L-seryl-tRNA(Sec), which will be further converted into selenocysteinyl-tRNA(Sec). This is Serine--tRNA ligase from Micrococcus luteus (strain ATCC 4698 / DSM 20030 / JCM 1464 / CCM 169 / CCUG 5858 / IAM 1056 / NBRC 3333 / NCIMB 9278 / NCTC 2665 / VKM Ac-2230) (Micrococcus lysodeikticus).